The primary structure comprises 151 residues: Probable cellulase Cel12b (151 aa).

Residues Glu-50 and Glu-133 contribute to the active site.

The protein belongs to the glycosyl hydrolase 12 (cellulase H) family.

In terms of biological role, probable cellulase. Can hydrolyze barley beta-glucan in vitro. Could be important for the survival of M.tuberculosis in the environment, perhaps in amoebal hosts. In Mycobacterium tuberculosis (strain ATCC 25618 / H37Rv), this protein is Probable cellulase Cel12b.